The primary structure comprises 175 residues: B9 domain-containing protein 2 (175 aa).

Residues 2 to 118 (AEVHVIGQII…ACPTWRPLGS (117 aa)) enclose the C2 B9-type domain.

The protein belongs to the B9D family. As to quaternary structure, part of the tectonic-like complex (also named B9 complex). Interacts with TUBG1.

Its subcellular location is the cytoplasm. The protein localises to the cytoskeleton. It localises to the cilium basal body. It is found in the cilium axoneme. The protein resides in the nucleus. Component of the tectonic-like complex, a complex localized at the transition zone of primary cilia and acting as a barrier that prevents diffusion of transmembrane proteins between the cilia and plasma membranes. In Homo sapiens (Human), this protein is B9 domain-containing protein 2 (B9D2).